We begin with the raw amino-acid sequence, 211 residues long: Phosphoheptose isomerase (211 aa).

An SIS domain is found at 50 to 211 (IAGTFEDGGK…VERMLGYCRL (162 aa)). 65–67 (NGG) is a substrate binding site. Positions 74 and 78 each coordinate Zn(2+). Substrate contacts are provided by residues Glu-78, 109-110 (ND), 135-137 (STS), Ser-140, and Gln-188. The Zn(2+) site is built by Gln-188 and His-196.

Belongs to the SIS family. GmhA subfamily. It depends on Zn(2+) as a cofactor.

The protein localises to the cytoplasm. The catalysed reaction is 2 D-sedoheptulose 7-phosphate = D-glycero-alpha-D-manno-heptose 7-phosphate + D-glycero-beta-D-manno-heptose 7-phosphate. Its pathway is carbohydrate biosynthesis; D-glycero-D-manno-heptose 7-phosphate biosynthesis; D-glycero-alpha-D-manno-heptose 7-phosphate and D-glycero-beta-D-manno-heptose 7-phosphate from sedoheptulose 7-phosphate: step 1/1. Catalyzes the isomerization of sedoheptulose 7-phosphate in D-glycero-D-manno-heptose 7-phosphate. The chain is Phosphoheptose isomerase from Pelodictyon phaeoclathratiforme (strain DSM 5477 / BU-1).